Here is a 289-residue protein sequence, read N- to C-terminus: Acetyl-coenzyme A carboxylase carboxyl transferase subunit beta (289 aa).

Residues 28–289 (LWSKCPSCEA…ALLQKLPAAA (262 aa)) enclose the CoA carboxyltransferase N-terminal domain. Residues C32, C35, C51, and C54 each coordinate Zn(2+). The C4-type zinc finger occupies 32-54 (CPSCEAVLYATDLENNLQVCPKC).

It belongs to the AccD/PCCB family. Acetyl-CoA carboxylase is a heterohexamer composed of biotin carboxyl carrier protein (AccB), biotin carboxylase (AccC) and two subunits each of ACCase subunit alpha (AccA) and ACCase subunit beta (AccD). Zn(2+) serves as cofactor.

It is found in the cytoplasm. The catalysed reaction is N(6)-carboxybiotinyl-L-lysyl-[protein] + acetyl-CoA = N(6)-biotinyl-L-lysyl-[protein] + malonyl-CoA. It functions in the pathway lipid metabolism; malonyl-CoA biosynthesis; malonyl-CoA from acetyl-CoA: step 1/1. Component of the acetyl coenzyme A carboxylase (ACC) complex. Biotin carboxylase (BC) catalyzes the carboxylation of biotin on its carrier protein (BCCP) and then the CO(2) group is transferred by the transcarboxylase to acetyl-CoA to form malonyl-CoA. The sequence is that of Acetyl-coenzyme A carboxylase carboxyl transferase subunit beta from Dechloromonas aromatica (strain RCB).